We begin with the raw amino-acid sequence, 402 residues long: Cysteine desulfurase NifS (402 aa).

Pyridoxal 5'-phosphate is bound by residues 72–73, N151, Q179, and 199–201; these read GT and CGH. Position 202 is an N6-(pyridoxal phosphate)lysine (K202). T237 contacts pyridoxal 5'-phosphate. C325 (cysteine persulfide intermediate) is an active-site residue. C325 lines the [2Fe-2S] cluster pocket.

The protein belongs to the class-V pyridoxal-phosphate-dependent aminotransferase family. NifS/IscS subfamily. Homodimer. Pyridoxal 5'-phosphate is required as a cofactor.

It carries out the reaction (sulfur carrier)-H + L-cysteine = (sulfur carrier)-SH + L-alanine. Its activity is regulated as follows. Inhibited by equimolar concentrations of p-chloromercuribenzoic acid, iodoacetamide or N-ethylmaleimide. In terms of biological role, catalyzes the removal of elemental sulfur atoms from cysteine to produce alanine. Seems to participate in the biosynthesis of the nitrogenase metalloclusters by providing the inorganic sulfur required for the Fe-S core formation. The chain is Cysteine desulfurase NifS from Azotobacter vinelandii.